Reading from the N-terminus, the 382-residue chain is Anhydro-N-acetylmuramic acid kinase (382 aa).

Residue 22 to 29 participates in ATP binding; it reads GTSMDGVD.

This sequence belongs to the anhydro-N-acetylmuramic acid kinase family.

The enzyme catalyses 1,6-anhydro-N-acetyl-beta-muramate + ATP + H2O = N-acetyl-D-muramate 6-phosphate + ADP + H(+). It participates in amino-sugar metabolism; 1,6-anhydro-N-acetylmuramate degradation. The protein operates within cell wall biogenesis; peptidoglycan recycling. Functionally, catalyzes the specific phosphorylation of 1,6-anhydro-N-acetylmuramic acid (anhMurNAc) with the simultaneous cleavage of the 1,6-anhydro ring, generating MurNAc-6-P. Is required for the utilization of anhMurNAc either imported from the medium or derived from its own cell wall murein, and thus plays a role in cell wall recycling. This Burkholderia orbicola (strain MC0-3) protein is Anhydro-N-acetylmuramic acid kinase.